The chain runs to 498 residues: Glycerol kinase (498 aa).

Residue Thr-12 participates in ADP binding. Thr-12, Thr-13, and Ser-14 together coordinate ATP. Thr-12 contacts sn-glycerol 3-phosphate. Arg-16 is an ADP binding site. Sn-glycerol 3-phosphate contacts are provided by Arg-82, Glu-83, Tyr-134, and Asp-243. Residues Arg-82, Glu-83, Tyr-134, Asp-243, and Gln-244 each coordinate glycerol. ADP is bound by residues Thr-265 and Gly-308. ATP contacts are provided by Thr-265, Gly-308, Gln-312, and Gly-409. ADP is bound by residues Gly-409 and Asn-413.

This sequence belongs to the FGGY kinase family. In terms of assembly, homotetramer and homodimer (in equilibrium).

The enzyme catalyses glycerol + ATP = sn-glycerol 3-phosphate + ADP + H(+). It functions in the pathway polyol metabolism; glycerol degradation via glycerol kinase pathway; sn-glycerol 3-phosphate from glycerol: step 1/1. Activated by phosphorylation and inhibited by fructose 1,6-bisphosphate (FBP). Functionally, key enzyme in the regulation of glycerol uptake and metabolism. Catalyzes the phosphorylation of glycerol to yield sn-glycerol 3-phosphate. The polypeptide is Glycerol kinase (Agathobacter rectalis (strain ATCC 33656 / DSM 3377 / JCM 17463 / KCTC 5835 / VPI 0990) (Eubacterium rectale)).